The following is a 350-amino-acid chain: Very-long-chain 3-oxoacyl-CoA reductase (350 aa).

A helical membrane pass occupies residues 28-48 (SLVLLAGIGALSVGTFALRLV). NADP(+) contacts are provided by V79, D134, N161, K196, Y228, K232, V261, and S263. Y228 functions as the Proton donor in the catalytic mechanism. K232 functions as the Lowers pKa of active site Tyr in the catalytic mechanism.

The protein belongs to the short-chain dehydrogenases/reductases (SDR) family.

The protein resides in the endoplasmic reticulum membrane. It carries out the reaction a very-long-chain (3R)-3-hydroxyacyl-CoA + NADP(+) = a very-long-chain 3-oxoacyl-CoA + NADPH + H(+). Its pathway is lipid metabolism; fatty acid biosynthesis. Its function is as follows. Component of the microsomal membrane bound fatty acid elongation system, which produces the 26-carbon very long-chain fatty acids (VLCFA) from palmitate. Catalyzes the reduction of the 3-ketoacyl-CoA intermediate that is formed in each cycle of fatty acid elongation. VLCFAs serve as precursors for ceramide and sphingolipids. This is Very-long-chain 3-oxoacyl-CoA reductase from Mycosarcoma maydis (Corn smut fungus).